The sequence spans 436 residues: Glutamyl-tRNA reductase (436 aa).

Residues 49–52, S109, 114–116, and Q120 each bind substrate; these read TCNR and EPQ. The active-site Nucleophile is C50. 189 to 194 contributes to the NADP(+) binding site; it reads GAGEMC.

The protein belongs to the glutamyl-tRNA reductase family. In terms of assembly, homodimer.

It catalyses the reaction (S)-4-amino-5-oxopentanoate + tRNA(Glu) + NADP(+) = L-glutamyl-tRNA(Glu) + NADPH + H(+). It functions in the pathway porphyrin-containing compound metabolism; protoporphyrin-IX biosynthesis; 5-aminolevulinate from L-glutamyl-tRNA(Glu): step 1/2. Catalyzes the NADPH-dependent reduction of glutamyl-tRNA(Glu) to glutamate 1-semialdehyde (GSA). The protein is Glutamyl-tRNA reductase of Pelobacter propionicus (strain DSM 2379 / NBRC 103807 / OttBd1).